A 117-amino-acid polypeptide reads, in one-letter code: Large ribosomal subunit protein bL19 (117 aa).

This sequence belongs to the bacterial ribosomal protein bL19 family.

In terms of biological role, this protein is located at the 30S-50S ribosomal subunit interface and may play a role in the structure and function of the aminoacyl-tRNA binding site. This chain is Large ribosomal subunit protein bL19, found in Vesicomyosocius okutanii subsp. Calyptogena okutanii (strain HA).